The following is a 241-amino-acid chain: NH(3)-dependent NAD(+) synthetase (241 aa).

27-34 serves as a coordination point for ATP; it reads GISGGIDS. D33 serves as a coordination point for Mg(2+). Residue R109 participates in deamido-NAD(+) binding. Residue T129 participates in ATP binding. E134 serves as a coordination point for Mg(2+). Positions 142 and 149 each coordinate deamido-NAD(+). Residues K158 and T180 each coordinate ATP. Position 231-232 (231-232) interacts with deamido-NAD(+); the sequence is HK.

The protein belongs to the NAD synthetase family. Homodimer.

It catalyses the reaction deamido-NAD(+) + NH4(+) + ATP = AMP + diphosphate + NAD(+) + H(+). It participates in cofactor biosynthesis; NAD(+) biosynthesis; NAD(+) from deamido-NAD(+) (ammonia route): step 1/1. Its function is as follows. Catalyzes the ATP-dependent amidation of deamido-NAD to form NAD. Uses ammonia as a nitrogen source. The sequence is that of NH(3)-dependent NAD(+) synthetase from Thermoplasma acidophilum (strain ATCC 25905 / DSM 1728 / JCM 9062 / NBRC 15155 / AMRC-C165).